We begin with the raw amino-acid sequence, 271 residues long: 3-methyl-2-oxobutanoate hydroxymethyltransferase 1 (271 aa).

Positions 53 and 92 each coordinate Mg(2+). 3-methyl-2-oxobutanoate is bound by residues 53–54, D92, and K120; that span reads DS. A Mg(2+)-binding site is contributed by E122. E189 serves as the catalytic Proton acceptor.

The protein belongs to the PanB family. In terms of assembly, homodecamer; pentamer of dimers. Mg(2+) serves as cofactor.

Its subcellular location is the cytoplasm. The catalysed reaction is 3-methyl-2-oxobutanoate + (6R)-5,10-methylene-5,6,7,8-tetrahydrofolate + H2O = 2-dehydropantoate + (6S)-5,6,7,8-tetrahydrofolate. The protein operates within cofactor biosynthesis; (R)-pantothenate biosynthesis; (R)-pantoate from 3-methyl-2-oxobutanoate: step 1/2. Catalyzes the reversible reaction in which hydroxymethyl group from 5,10-methylenetetrahydrofolate is transferred onto alpha-ketoisovalerate to form ketopantoate. In Burkholderia cenocepacia (strain HI2424), this protein is 3-methyl-2-oxobutanoate hydroxymethyltransferase 1.